The sequence spans 99 residues: MADYKIHLLCEEEGIDVTFNCAEDTYILDAAEEEGIELPYSCRAGACSTCAGKVTEGTVDQADQSFLDDDQLLAGYVLTCIAYPSSDCTISTHVEQELY.

One can recognise a 2Fe-2S ferredoxin-type domain in the interval 4 to 96 (YKIHLLCEEE…DCTISTHVEQ (93 aa)). 4 residues coordinate [2Fe-2S] cluster: Cys-42, Cys-47, Cys-50, and Cys-80.

Belongs to the 2Fe2S plant-type ferredoxin family. As to quaternary structure, forms a complex with heterodimeric ferredoxin-thioredoxin reductase (FTR) and thioredoxin. [2Fe-2S] cluster is required as a cofactor.

The protein resides in the plastid. Its subcellular location is the chloroplast. In terms of biological role, ferredoxins are iron-sulfur proteins that transfer electrons in a wide variety of metabolic reactions. This chain is Ferredoxin (petF), found in Pyropia yezoensis (Susabi-nori).